The primary structure comprises 310 residues: Homocysteine S-methyltransferase (310 aa).

The 310-residue stretch at 1 to 310 (MSQNNPLRAL…ADIAALKARS (310 aa)) folds into the Hcy-binding domain. C229, C295, and C296 together coordinate Zn(2+).

Monomer. It depends on Zn(2+) as a cofactor.

It catalyses the reaction S-methyl-L-methionine + L-homocysteine = 2 L-methionine + H(+). Catalyzes methyl transfer from S-methylmethionine or S-adenosylmethionine (less efficient) to homocysteine, selenohomocysteine and less efficiently selenocysteine. This is Homocysteine S-methyltransferase (mmuM) from Escherichia coli (strain K12).